The primary structure comprises 106 residues: UPF0060 membrane protein Mrad2831_0929 (106 aa).

4 helical membrane passes run 3–23, 30–50, 59–79, and 87–104; these read LLAYAAAALAEIAGCFAFWAW, AWWTLPGLASLAAFAALLTLV, FAAYGGVYVAASVLWLWLAEG, and LAGSAVCLAGTALILLGR.

The protein belongs to the UPF0060 family.

It is found in the cell inner membrane. This chain is UPF0060 membrane protein Mrad2831_0929, found in Methylobacterium radiotolerans (strain ATCC 27329 / DSM 1819 / JCM 2831 / NBRC 15690 / NCIMB 10815 / 0-1).